We begin with the raw amino-acid sequence, 882 residues long: Translation initiation factor IF-2 (882 aa).

Polar residues-rich tracts occupy residues 38 to 56 (NDSN…AEYS), 97 to 124 (GGYS…YSQN), and 140 to 192 (GGYS…NRDS). Disordered regions lie at residues 38-192 (NDSN…NRDS) and 236-274 (STPA…AETE). Positions 243 to 259 (ENSKELNRKLGEKKKQQ) are enriched in basic and acidic residues. The region spanning 380 to 553 (EKPPVITIMG…DMMLLKANPS (174 aa)) is the tr-type G domain. The G1 stretch occupies residues 389–396 (GHVDHGKT). 389 to 396 (GHVDHGKT) contacts GTP. Positions 414–418 (GITQH) are G2. The interval 435 to 438 (DTPG) is G3. GTP contacts are provided by residues 435–439 (DTPGH) and 489–492 (NKID). The G4 stretch occupies residues 489–492 (NKID). The G5 stretch occupies residues 525-527 (SAL).

The protein belongs to the TRAFAC class translation factor GTPase superfamily. Classic translation factor GTPase family. IF-2 subfamily.

It localises to the cytoplasm. Functionally, one of the essential components for the initiation of protein synthesis. Protects formylmethionyl-tRNA from spontaneous hydrolysis and promotes its binding to the 30S ribosomal subunits. Also involved in the hydrolysis of GTP during the formation of the 70S ribosomal complex. The sequence is that of Translation initiation factor IF-2 (infB) from Borreliella burgdorferi (strain ATCC 35210 / DSM 4680 / CIP 102532 / B31) (Borrelia burgdorferi).